We begin with the raw amino-acid sequence, 401 residues long: 8-amino-7-oxononanoate synthase (401 aa).

Arginine 24 is a substrate binding site. Residue 111–112 (GF) participates in pyridoxal 5'-phosphate binding. Residue histidine 137 coordinates substrate. 3 residues coordinate pyridoxal 5'-phosphate: serine 183, histidine 211, and threonine 240. Lysine 243 is modified (N6-(pyridoxal phosphate)lysine). Threonine 357 provides a ligand contact to substrate.

Belongs to the class-II pyridoxal-phosphate-dependent aminotransferase family. BioF subfamily. As to quaternary structure, homodimer. Requires pyridoxal 5'-phosphate as cofactor.

It catalyses the reaction 6-carboxyhexanoyl-[ACP] + L-alanine + H(+) = (8S)-8-amino-7-oxononanoate + holo-[ACP] + CO2. Its pathway is cofactor biosynthesis; biotin biosynthesis. Functionally, catalyzes the decarboxylative condensation of pimeloyl-[acyl-carrier protein] and L-alanine to produce 8-amino-7-oxononanoate (AON), [acyl-carrier protein], and carbon dioxide. In Xanthomonas campestris pv. campestris (strain B100), this protein is 8-amino-7-oxononanoate synthase.